Here is a 558-residue protein sequence, read N- to C-terminus: Phosphatidylserine lipase ABHD16A (558 aa).

A run of 2 helical transmembrane segments spans residues 60–80 and 93–113; these read ILAL…FAFF and VVPF…VACL. Topologically, residues 114 to 558 are cytoplasmic; sequence RGIGRWTNPQ…AQNFQMPWHL (445 aa). Residues 281 to 407 enclose the AB hydrolase-1 domain; it reads LVICCEGNAG…LVTRTVRQHL (127 aa). Active-site charge relay system residues include Ser-355, Asp-430, and His-507.

It belongs to the AB hydrolase superfamily. ABHD16 family.

It localises to the membrane. The catalysed reaction is 1-heptadecanoyl-2-(5Z,8Z,11Z,14Z-eicosatetraenoyl)-sn-glycero-3-phosphoserine + H2O = 1-heptadecanoyl-sn-glycero-3-phosphoserine + (5Z,8Z,11Z,14Z)-eicosatetraenoate + H(+). It catalyses the reaction 1-hexadecanoyl-2-(9Z-octadecenoyl)-sn-glycero-3-phospho-L-serine + H2O = 1-hexadecanoyl-sn-glycero-3-phospho-L-serine + (9Z)-octadecenoate + H(+). It carries out the reaction 1-octadecanoyl-2-(9Z,12Z-octadecadienoyl)-sn-glycero-3-phosphoserine + H2O = 1-octadecanoyl-sn-glycero-3-phosphoserine + (9Z,12Z)-octadecadienoate + H(+). The enzyme catalyses 1-heptadecanoyl-2-(5Z,8Z,11Z,14Z-eicosatetraenoyl)-sn-glycero-3-phosphocholine + H2O = 1-heptadecanoyl-sn-glycero-3-phosphocholine + (5Z,8Z,11Z,14Z)-eicosatetraenoate + H(+). The catalysed reaction is 1-hexadecanoyl-2-(9Z-octadecenoyl)-sn-glycero-3-phosphoglycerol + H2O = 1-hexadecanoyl-sn-glycero-3-phosphoglycerol + (9Z)-octadecenoate + H(+). It catalyses the reaction 1-hexadecanoyl-2-(9Z-octadecenoyl)-sn-glycero-3-phospho-(1D-myo-inositol) + H2O = 1-hexadecanoyl-sn-glycero-3-phospho-(1D-myo-inositol) + (9Z)-octadecenoate + H(+). It carries out the reaction 1-heptadecanoyl-2-(5Z,8Z,11Z,14Z-eicosatetraenoyl)-sn-glycero-3-phosphoethanolamine + H2O = 1-heptadecanoyl-sn-glycero-3-phosphoethanolamine + (5Z,8Z,11Z,14Z)-eicosatetraenoate + H(+). The enzyme catalyses 1-hexadecanoyl-2-(9Z-octadecenoyl)-sn-glycero-3-phospho-(1'-sn-glycerol) + H2O = 1-hexadecanoyl-sn-glycero-3-phospho-(1'-sn-glycerol) + (9Z)-octadecenoate + H(+). The catalysed reaction is Hydrolyzes glycerol monoesters of long-chain fatty acids.. It catalyses the reaction 1-tetradecanoylglycerol + H2O = tetradecanoate + glycerol + H(+). It carries out the reaction 2-hexadecanoylglycerol + H2O = glycerol + hexadecanoate + H(+). The enzyme catalyses 1-(9Z-octadecenoyl)-glycerol + H2O = glycerol + (9Z)-octadecenoate + H(+). The catalysed reaction is 2-(9Z-octadecenoyl)-glycerol + H2O = glycerol + (9Z)-octadecenoate + H(+). It catalyses the reaction 2-(9Z,12Z-octadecadienoyl)-glycerol + H2O = (9Z,12Z)-octadecadienoate + glycerol + H(+). It carries out the reaction 1-(5Z,8Z,11Z,14Z-eicosatetraenoyl)-glycerol + H2O = glycerol + (5Z,8Z,11Z,14Z)-eicosatetraenoate + H(+). The enzyme catalyses 2-(5Z,8Z,11Z,14Z-eicosatetraenoyl)-glycerol + H2O = glycerol + (5Z,8Z,11Z,14Z)-eicosatetraenoate + H(+). The catalysed reaction is prostaglandin D2-1-glycerol ester + H2O = prostaglandin D2 + glycerol + H(+). It catalyses the reaction 2-glyceryl-15-deoxy-Delta(12,14)-prostaglandin J2 + H2O = 15-deoxy-Delta(12,14)-prostaglandin J2 + glycerol + H(+). It carries out the reaction 1-(9Z,12Z-octadecadienoyl)-glycerol + H2O = (9Z,12Z)-octadecadienoate + glycerol + H(+). Its function is as follows. Phosphatidylserine (PS) lipase that mediates the hydrolysis of phosphatidylserine to generate lysophosphatidylserine (LPS). LPS constitutes a class of signaling lipids that regulates immunological and neurological processes. Has no activity towards diacylglycerol, triacylglycerol or lysophosphatidylserine lipase. Also has monoacylglycerol lipase activity, with preference for 1-(9Z,12Z-octadecadienoyl)-glycerol (1-LG) and 2-glyceryl-15-deoxy-Delta(12,14)-prostaglandin J2 (15d-PGJ(2)-G). This chain is Phosphatidylserine lipase ABHD16A, found in Pongo abelii (Sumatran orangutan).